Here is a 365-residue protein sequence, read N- to C-terminus: 3-isopropylmalate dehydrogenase (365 aa).

80 to 91 (GPKWGTGSVRPE) serves as a coordination point for NAD(+). Substrate is bound by residues Arg-98, Arg-108, Arg-137, and Asp-226. Mg(2+) is bound by residues Asp-226, Asp-251, and Asp-255. 290–301 (GSAPDLPKGKVN) contacts NAD(+).

This sequence belongs to the isocitrate and isopropylmalate dehydrogenases family. Homodimer. It depends on Mg(2+) as a cofactor. Mn(2+) serves as cofactor.

It is found in the cytoplasm. The enzyme catalyses (2R,3S)-3-isopropylmalate + NAD(+) = 4-methyl-2-oxopentanoate + CO2 + NADH. It functions in the pathway amino-acid biosynthesis; L-leucine biosynthesis; L-leucine from 3-methyl-2-oxobutanoate: step 3/4. Its function is as follows. Catalyzes the oxidation of 3-carboxy-2-hydroxy-4-methylpentanoate (3-isopropylmalate) to 3-carboxy-4-methyl-2-oxopentanoate. The product decarboxylates to 4-methyl-2 oxopentanoate. The sequence is that of 3-isopropylmalate dehydrogenase (LEU2) from Maudiozyma exigua (Yeast).